Reading from the N-terminus, the 601-residue chain is Probable inactive receptor kinase At1g27190 (601 aa).

A signal peptide spans 1–24 (MKKIFITLLWLLFISSFLCSSSSA). Asn52 carries an N-linked (GlcNAc...) asparagine glycan. 5 LRR repeats span residues 73 to 95 (RIIS…LKLC), 97 to 119 (SLQS…ICSW), 122 to 144 (YLVT…IVEC), 146 to 169 (FLNA…SRLD), and 170 to 192 (RLRR…LARF). A helical membrane pass occupies residues 221-241 (IIIVAGVLGAVGSLCVGLVIF). Thr298 carries the phosphothreonine modification. One can recognise a Protein kinase domain in the interval 301–586 (FSSGNIDVSS…KNMADKHGVS (286 aa)). ATP contacts are provided by residues 307–315 (DVSSRTGVS) and Lys329. Residue Ser383 is modified to Phosphoserine. At Thr399 the chain carries Phosphothreonine. Tyr476 bears the Phosphotyrosine mark. Ser478 carries the post-translational modification Phosphoserine. Thr479 is modified (phosphothreonine). Phosphoserine occurs at positions 483 and 586.

Belongs to the protein kinase superfamily. Ser/Thr protein kinase family.

The protein localises to the membrane. This Arabidopsis thaliana (Mouse-ear cress) protein is Probable inactive receptor kinase At1g27190.